The primary structure comprises 229 residues: MNPLTRVALAVAAFAALVLALSACGPAHVAGHVPKRRDYAVPDAAGQEAQAASAGSTWREGRAASMLYTDARALRVNDLVVVRIEEIADAKRSADTDLTRRSELNASIEAFLTSLDAPYALKGGATTGFKGLGSTARTERLTATVPAVVRKVLPNGNLFIEGHRVVLVNAEEQHFYISGVVRPIDIDQENGVKSSMVADAEIEFTGRGVLSDNQRQGWLSRLLGWFWPF.

Positions 1–23 (MNPLTRVALAVAAFAALVLALSA) are cleaved as a signal peptide. Cys-24 carries the N-palmitoyl cysteine lipid modification. Cys-24 is lipidated: S-diacylglycerol cysteine.

The protein belongs to the FlgH family. In terms of assembly, the basal body constitutes a major portion of the flagellar organelle and consists of four rings (L,P,S, and M) mounted on a central rod.

The protein resides in the cell outer membrane. It localises to the bacterial flagellum basal body. Functionally, assembles around the rod to form the L-ring and probably protects the motor/basal body from shearing forces during rotation. The protein is Flagellar L-ring protein of Anaeromyxobacter sp. (strain K).